Here is a 762-residue protein sequence, read N- to C-terminus: Pyrophosphate-energized vacuolar membrane proton pump (762 aa).

The Intravacuolar segment spans residues methionine 1–glutamate 6. The helical transmembrane segment at leucine 7–lysine 33 threads the bilayer. The Cytoplasmic segment spans residues valine 34 to glycine 81. Residues alanine 82–isoleucine 111 traverse the membrane as a helical segment. Residues glutamate 112–alanine 131 lie on the Intravacuolar side of the membrane. A disulfide bond links cysteine 121 and cysteine 128. Residues leucine 132 to isoleucine 159 traverse the membrane as a helical segment. Over alanine 160–alanine 182 the chain is Cytoplasmic. Residues phenylalanine 183–tyrosine 212 form a helical membrane-spanning segment. The Intravacuolar segment spans residues glycine 213–aspartate 215. A helical transmembrane segment spans residues tryptophan 216 to tyrosine 244. Residues threonine 245–glycine 282 are Cytoplasmic-facing. Residue lysine 246 coordinates substrate. Mg(2+) contacts are provided by aspartate 249, aspartate 253, and aspartate 279. The chain crosses the membrane as a helical span at residues aspartate 283–isoleucine 308. The Intravacuolar portion of the chain corresponds to serine 309 to aspartate 316. A helical transmembrane segment spans residues phenylalanine 317–threonine 342. The Cytoplasmic segment spans residues aspartate 343–alanine 350. A helical membrane pass occupies residues asparagine 351 to leucine 378. Over alanine 379–asparagine 397 the chain is Intravacuolar. A helical transmembrane segment spans residues tryptophan 398 to tyrosine 421. Residues threonine 422–asparagine 443 are Cytoplasmic-facing. The chain crosses the membrane as a helical span at residues valine 444–valine 468. The Intravacuolar segment spans residues serine 469 to alanine 474. The chain crosses the membrane as a helical span at residues methionine 475 to isoleucine 501. The Cytoplasmic portion of the chain corresponds to serine 502–asparagine 530. Residues aspartate 503 and asparagine 530 each coordinate Mg(2+). The chain crosses the membrane as a helical span at residues threonine 531–alanine 559. Residues glycine 560–proline 569 lie on the Intravacuolar side of the membrane. Residues lysine 570–leucine 598 traverse the membrane as a helical segment. The Cytoplasmic portion of the chain corresponds to lysine 599–valine 627. The helical transmembrane segment at lysine 628 to phenylalanine 656 threads the bilayer. Residue glycine 657 is a topological domain, intravacuolar. Residues valine 658–alanine 685 form a helical membrane-spanning segment. The Cytoplasmic portion of the chain corresponds to tryptophan 686–threonine 728. The Mg(2+) site is built by aspartate 687 and aspartate 723. Lysine 726 contributes to the substrate binding site. The chain crosses the membrane as a helical span at residues serine 729 to tyrosine 754. Residues glycine 755–isoleucine 762 are Intravacuolar-facing.

The protein belongs to the H(+)-translocating pyrophosphatase (TC 3.A.10) family. K(+)-stimulated subfamily. As to quaternary structure, monomer.

It is found in the vacuole membrane. The catalysed reaction is diphosphate + H2O + H(+)(in) = 2 phosphate + 2 H(+)(out). In terms of biological role, contributes to the transtonoplast (from cytosol to vacuole lumen) H(+)-electrochemical potential difference. It establishes a proton gradient of similar and often greater magnitude than the H(+)-ATPase on the same membrane. This is Pyrophosphate-energized vacuolar membrane proton pump from Hordeum vulgare (Barley).